A 494-amino-acid polypeptide reads, in one-letter code: Hexokinase-2 (494 aa).

Positions 32-483 (GRADAVLREL…SGIGAALLAA (452 aa)) constitute a Hexokinase domain. The tract at residues 87 to 225 (SGEEKGVFYA…GLDMKVTALI (139 aa)) is hexokinase small subdomain. Gly101, Thr102, and Asn103 together coordinate ADP. D-glucose-binding residues include Thr191, Lys192, Asn226, and Asp227. Residues 226–472 (NDTIGTLAGG…STIVIKLAKD (247 aa)) are hexokinase large subdomain. Residue Thr250 participates in ADP binding. Asn253, Glu281, and Glu312 together coordinate D-glucose. ADP is bound at residue Gly437.

The protein belongs to the hexokinase family. In terms of tissue distribution, expressed in roots, leaves, flowers, immature seeds, endosperm and seed coat.

The enzyme catalyses a D-hexose + ATP = a D-hexose 6-phosphate + ADP + H(+). It carries out the reaction D-fructose + ATP = D-fructose 6-phosphate + ADP + H(+). The catalysed reaction is D-glucose + ATP = D-glucose 6-phosphate + ADP + H(+). The protein operates within carbohydrate metabolism; hexose metabolism. It participates in carbohydrate degradation; glycolysis; D-glyceraldehyde 3-phosphate and glycerone phosphate from D-glucose: step 1/4. Fructose and glucose phosphorylating enzyme. The polypeptide is Hexokinase-2 (HXK2) (Oryza sativa subsp. japonica (Rice)).